A 478-amino-acid polypeptide reads, in one-letter code: Ubiquitin carboxyl-terminal hydrolase calypso (478 aa).

Residues 11 to 239 (GWLELESDPG…IRFNLMAVVP (229 aa)) form the UCH catalytic domain. Residue Cys-97 is the Nucleophile of the active site. His-176 serves as the catalytic Proton donor. The ULD domain occupies 400 to 428 (NYDEFICTFLSMLAHQGELGDLVSQHLIT). The positively charged C-terminal tail required for binding nucleosomes stretch occupies residues 430 to 478 (RKPNMGSVQNSGSRGVVRNYNKKTTTNGSSPKTPSSKRRRGRTKYRKRK). Positions 432-442 (PNMGSVQNSGS) are enriched in polar residues. The segment at 432–478 (PNMGSVQNSGSRGVVRNYNKKTTTNGSSPKTPSSKRRRGRTKYRKRK) is disordered. Basic residues predominate over residues 464 to 478 (SSKRRRGRTKYRKRK).

It belongs to the peptidase C12 family. BAP1 subfamily. In terms of assembly, catalytic component of the polycomb repressive deubiquitinase (PR-DUB) complex, at least composed of caly/calypso, Asx and sba (MBD5/6 homolog). The PR-DUB complex associates with nucleosomes to mediate deubiquitination of histone H2AK118ub1 substrates; the association requires the positively charged C-terminal tail of caly, probably due to direct binding of DNA. Interacts (via ULD domain) with Asx (via DEUBAD domain); the interaction produces a stable heterodimer with a composite binding site for ubiquitin. Homodimerizes (via coiled-coil hinge-region between the UCH and ULD domains) to mediate assembly of 2 copies of the caly-Asx heterodimer into a bisymmetric tetramer; dimerization enhances PR-DUB association with nucleosomes.

The protein localises to the nucleus. The enzyme catalyses Thiol-dependent hydrolysis of ester, thioester, amide, peptide and isopeptide bonds formed by the C-terminal Gly of ubiquitin (a 76-residue protein attached to proteins as an intracellular targeting signal).. Functionally, catalytic component of the polycomb repressive deubiquitinase (PR-DUB) complex, a complex that specifically mediates deubiquitination of histone H2A monoubiquitinated at 'Lys-119' (H2AK118ub1). Mediates bisymmetric organization of the PR-DUB complex and is involved in association with nucleosomes to mediate deubiquitination. Does not deubiquitinate monoubiquitinated histone H2B. Required to maintain the transcriptionally repressive state of homeotic genes throughout development. The PR-DUB complex has weak or no activity toward 'Lys-48'- and 'Lys-63'-linked polyubiquitin chains. Polycomb group (PcG) protein. The protein is Ubiquitin carboxyl-terminal hydrolase calypso of Aedes aegypti (Yellowfever mosquito).